The following is a 145-amino-acid chain: 3-dehydroquinate dehydratase (145 aa).

Catalysis depends on tyrosine 24, which acts as the Proton acceptor. Residues asparagine 76, histidine 82, and aspartate 89 each contribute to the substrate site. Histidine 102 acts as the Proton donor in catalysis. Substrate contacts are provided by residues 103-104 (VS) and arginine 113.

Belongs to the type-II 3-dehydroquinase family. As to quaternary structure, homododecamer.

The catalysed reaction is 3-dehydroquinate = 3-dehydroshikimate + H2O. It participates in metabolic intermediate biosynthesis; chorismate biosynthesis; chorismate from D-erythrose 4-phosphate and phosphoenolpyruvate: step 3/7. Catalyzes a trans-dehydration via an enolate intermediate. The chain is 3-dehydroquinate dehydratase from Janthinobacterium sp. (strain Marseille) (Minibacterium massiliensis).